The chain runs to 113 residues: Large ribosomal subunit protein bL19 (113 aa).

Belongs to the bacterial ribosomal protein bL19 family.

Functionally, this protein is located at the 30S-50S ribosomal subunit interface and may play a role in the structure and function of the aminoacyl-tRNA binding site. The polypeptide is Large ribosomal subunit protein bL19 (Moorella thermoacetica (strain ATCC 39073 / JCM 9320)).